The chain runs to 143 residues: Competence protein ComGD (143 aa).

A propeptide spanning residues 1-10 (MNIKLNEEKG) is cleaved from the precursor. Phe-11 bears the N-methylphenylalanine mark. Residues 11–31 (FTLLESLLVLSLASILLVAVF) form a helical membrane-spanning segment.

In terms of assembly, the transformation pili are flexible filaments, consisting mainly of the major pilin ComGC and smaller amounts of the minor pilins, including at least ComGD, ComGF and ComGG. Interacts with ComGF. Interacts with ComGG. In terms of processing, processing of ComGD in competent cells requires ComC.

The protein localises to the cell membrane. It localises to the cell surface. Its function is as follows. Required for formation of the type IV-like pilus (T4P) that plays a role in transformation. Transformation pili are dynamically extended and retracted, perhaps thereby promoting DNA uptake and transformation. Required for transformation and DNA binding. The chain is Competence protein ComGD (comGD) from Bacillus subtilis (strain 168).